A 199-amino-acid chain; its full sequence is Transgelin-2 (199 aa).

Position 2 is an N-acetylalanine (Ala-2). Position 11 is a phosphoserine (Ser-11). An N6-acetyllysine mark is found at Lys-17 and Lys-20. The Calponin-homology (CH) domain maps to Ala-24–Ala-136. Position 163 is a phosphoserine (Ser-163). Residue Lys-171 forms a Glycyl lysine isopeptide (Lys-Gly) (interchain with G-Cter in SUMO2) linkage. Residues Ile-174–Leu-199 form a Calponin-like repeat. Thr-180 carries the phosphothreonine modification. Arg-182 and Arg-196 each carry omega-N-methylarginine.

The protein belongs to the calponin family. As to expression, expressed in epididymis (at protein level).

The protein is Transgelin-2 (TAGLN2) of Homo sapiens (Human).